Consider the following 930-residue polypeptide: Isoleucine--tRNA ligase (930 aa).

A 'HIGH' region motif is present at residues 57-67 (PYANGNIHVGH). E554 serves as a coordination point for L-isoleucyl-5'-AMP. Positions 595-599 (KMSKS) match the 'KMSKS' region motif. Residue K598 coordinates ATP. Positions 888, 891, 908, and 911 each coordinate Zn(2+).

Belongs to the class-I aminoacyl-tRNA synthetase family. IleS type 1 subfamily. In terms of assembly, monomer. Requires Zn(2+) as cofactor.

Its subcellular location is the cytoplasm. The catalysed reaction is tRNA(Ile) + L-isoleucine + ATP = L-isoleucyl-tRNA(Ile) + AMP + diphosphate. In terms of biological role, catalyzes the attachment of isoleucine to tRNA(Ile). As IleRS can inadvertently accommodate and process structurally similar amino acids such as valine, to avoid such errors it has two additional distinct tRNA(Ile)-dependent editing activities. One activity is designated as 'pretransfer' editing and involves the hydrolysis of activated Val-AMP. The other activity is designated 'posttransfer' editing and involves deacylation of mischarged Val-tRNA(Ile). This Streptococcus pneumoniae (strain CGSP14) protein is Isoleucine--tRNA ligase.